Consider the following 302-residue polypeptide: Phytoene synthase (302 aa).

This sequence belongs to the phytoene/squalene synthase family. It depends on ATP as a cofactor. Requires Mn(2+) as cofactor. Mg(2+) is required as a cofactor.

Its pathway is carotenoid biosynthesis; phytoene biosynthesis. In terms of biological role, involved in the biosynthesis of carotenoids. Catalyzes the condensation of two molecules of geranylgeranyl diphosphate (GGPP) to give prephytoene diphosphate (PPPP) and the subsequent rearrangement of the cyclopropylcarbinyl intermediate to yield phytoene. This Mycobacterium bovis (strain ATCC BAA-935 / AF2122/97) protein is Phytoene synthase (crtB).